We begin with the raw amino-acid sequence, 70 residues long: Large ribosomal subunit protein bL31 (70 aa).

C16, C18, C38, and C41 together coordinate Zn(2+).

The protein belongs to the bacterial ribosomal protein bL31 family. Type A subfamily. In terms of assembly, part of the 50S ribosomal subunit. Requires Zn(2+) as cofactor.

In terms of biological role, binds the 23S rRNA. The chain is Large ribosomal subunit protein bL31 from Bifidobacterium longum (strain DJO10A).